Consider the following 518-residue polypeptide: Dihydro-ML-236C monooxygenase mlcC (518 aa).

Topologically, residues 1–31 (MLGQVLLTVESYQWVSTPQALVAVAVLLSLI) are cytoplasmic. Residues 32–48 (AYRLRGRQSELQVYNPK) form a helical; Signal-anchor for type II membrane protein membrane-spanning segment. Residues 49–518 (KWWELTTMRA…EDIPLPHDRC (470 aa)) are Lumenal-facing. Cys454 serves as a coordination point for heme.

Belongs to the cytochrome P450 family. Requires heme as cofactor.

The protein resides in the endoplasmic reticulum membrane. The catalysed reaction is dihydro-ML-236C carboxylate + reduced [NADPH--hemoprotein reductase] + O2 = ML-236C carboxylate + oxidized [NADPH--hemoprotein reductase] + 2 H2O + H(+). It catalyses the reaction ML-236C carboxylate + reduced [NADPH--hemoprotein reductase] + O2 = ML-236A carboxylate + oxidized [NADPH--hemoprotein reductase] + H2O + H(+). The protein operates within polyketide biosynthesis. Dihydro-ML-236C carboxylate monooxygenase; part of the gene cluster that mediates the biosynthesis of compactin, also known as mevastatin or ML-236B, and which acts as a potent competitive inhibitor of HMG-CoA reductase. Compactin biosynthesis is performed in two stages. The first stage is catalyzed by the nonaketide synthase mlcA, which belongs to type I polyketide synthases and catalyzes the iterative nine-step formation of the polyketide. This PKS stage is completed by the action of dehydrogenase mlcG, which catalyzes the NADPH-dependent reduction of the unsaturated tetra-, penta- and heptaketide intermediates that arise during the mlcA-mediated biosynthesis of the nonaketide chain and leads to dihydro-ML-236C carboxylate. Covalently bound dihydro-ML-236C carboxylate is released from mlcA by the mlcF esterase. Conversion of dihydro-ML-236C carboxylate into ML-236A carboxylate is subsequently performed with the participation of molecular oxygen and P450 monoogygenase mlcC. Finally, mlcH performs the conversion of ML-236A carboxylate to ML-236B/compactin carboxylate through the addition of the side-chain diketide moiety produced by the diketide synthase mlcB. This Penicillium citrinum protein is Dihydro-ML-236C monooxygenase mlcC.